The primary structure comprises 461 residues: V-type ATP synthase beta chain (461 aa).

Belongs to the ATPase alpha/beta chains family.

In terms of biological role, produces ATP from ADP in the presence of a proton gradient across the membrane. The V-type beta chain is a regulatory subunit. This is V-type ATP synthase beta chain from Clostridium botulinum (strain Kyoto / Type A2).